Reading from the N-terminus, the 212-residue chain is Imidazole glycerol phosphate synthase subunit HisH (212 aa).

The region spanning 1–212 (MLAILDYKAG…YAYCKEASRA (212 aa)) is the Glutamine amidotransferase type-1 domain. C79 (nucleophile) is an active-site residue. Active-site residues include H187 and E189.

Heterodimer of HisH and HisF.

It localises to the cytoplasm. It carries out the reaction 5-[(5-phospho-1-deoxy-D-ribulos-1-ylimino)methylamino]-1-(5-phospho-beta-D-ribosyl)imidazole-4-carboxamide + L-glutamine = D-erythro-1-(imidazol-4-yl)glycerol 3-phosphate + 5-amino-1-(5-phospho-beta-D-ribosyl)imidazole-4-carboxamide + L-glutamate + H(+). It catalyses the reaction L-glutamine + H2O = L-glutamate + NH4(+). It participates in amino-acid biosynthesis; L-histidine biosynthesis; L-histidine from 5-phospho-alpha-D-ribose 1-diphosphate: step 5/9. Its function is as follows. IGPS catalyzes the conversion of PRFAR and glutamine to IGP, AICAR and glutamate. The HisH subunit catalyzes the hydrolysis of glutamine to glutamate and ammonia as part of the synthesis of IGP and AICAR. The resulting ammonia molecule is channeled to the active site of HisF. The protein is Imidazole glycerol phosphate synthase subunit HisH of Nitratidesulfovibrio vulgaris (strain DSM 19637 / Miyazaki F) (Desulfovibrio vulgaris).